Consider the following 63-residue polypeptide: Large ribosomal subunit protein bL35 (63 aa).

The protein belongs to the bacterial ribosomal protein bL35 family.

The protein is Large ribosomal subunit protein bL35 of Campylobacter fetus subsp. fetus (strain 82-40).